Reading from the N-terminus, the 207-residue chain is Protein GrpE (207 aa).

The span at Met1–Asn11 shows a compositional bias: basic and acidic residues. Residues Met1–Ala40 form a disordered region.

The protein belongs to the GrpE family. In terms of assembly, homodimer.

Its subcellular location is the cytoplasm. Functionally, participates actively in the response to hyperosmotic and heat shock by preventing the aggregation of stress-denatured proteins, in association with DnaK and GrpE. It is the nucleotide exchange factor for DnaK and may function as a thermosensor. Unfolded proteins bind initially to DnaJ; upon interaction with the DnaJ-bound protein, DnaK hydrolyzes its bound ATP, resulting in the formation of a stable complex. GrpE releases ADP from DnaK; ATP binding to DnaK triggers the release of the substrate protein, thus completing the reaction cycle. Several rounds of ATP-dependent interactions between DnaJ, DnaK and GrpE are required for fully efficient folding. The sequence is that of Protein GrpE from Rhodopseudomonas palustris (strain ATCC BAA-98 / CGA009).